Here is a 336-residue protein sequence, read N- to C-terminus: Glycerol-3-phosphate dehydrogenase [NAD(P)+] (336 aa).

Residues serine 16, tyrosine 17, histidine 37, and lysine 111 each contribute to the NADPH site. Lysine 111, glycine 140, and threonine 142 together coordinate sn-glycerol 3-phosphate. Residue alanine 144 coordinates NADPH. 5 residues coordinate sn-glycerol 3-phosphate: lysine 196, aspartate 249, serine 259, arginine 260, and asparagine 261. The active-site Proton acceptor is lysine 196. Residue arginine 260 coordinates NADPH. NADPH is bound by residues valine 284 and glutamate 286.

Belongs to the NAD-dependent glycerol-3-phosphate dehydrogenase family.

It is found in the cytoplasm. The catalysed reaction is sn-glycerol 3-phosphate + NAD(+) = dihydroxyacetone phosphate + NADH + H(+). It carries out the reaction sn-glycerol 3-phosphate + NADP(+) = dihydroxyacetone phosphate + NADPH + H(+). It participates in membrane lipid metabolism; glycerophospholipid metabolism. Functionally, catalyzes the reduction of the glycolytic intermediate dihydroxyacetone phosphate (DHAP) to sn-glycerol 3-phosphate (G3P), the key precursor for phospholipid synthesis. In Actinobacillus pleuropneumoniae serotype 5b (strain L20), this protein is Glycerol-3-phosphate dehydrogenase [NAD(P)+].